We begin with the raw amino-acid sequence, 214 residues long: Orotate phosphoribosyltransferase (214 aa).

Lys-26 contacts 5-phospho-alpha-D-ribose 1-diphosphate. 34–35 (FF) contacts orotate. 5-phospho-alpha-D-ribose 1-diphosphate contacts are provided by residues 72–73 (YK), Arg-99, Lys-100, Lys-103, His-105, and 124–132 (DDVITAGTA). Positions 128 and 156 each coordinate orotate.

The protein belongs to the purine/pyrimidine phosphoribosyltransferase family. PyrE subfamily. In terms of assembly, homodimer. Mg(2+) serves as cofactor.

It catalyses the reaction orotidine 5'-phosphate + diphosphate = orotate + 5-phospho-alpha-D-ribose 1-diphosphate. It participates in pyrimidine metabolism; UMP biosynthesis via de novo pathway; UMP from orotate: step 1/2. Catalyzes the transfer of a ribosyl phosphate group from 5-phosphoribose 1-diphosphate to orotate, leading to the formation of orotidine monophosphate (OMP). This Mannheimia succiniciproducens (strain KCTC 0769BP / MBEL55E) protein is Orotate phosphoribosyltransferase.